The chain runs to 240 residues: MEHPILFISIILEKLGLPVPHGPVGQTFLEKMCEPYMTYTWLVMAFLFLVSKFTLGNLEIIPGKGQNFWEMIIGGMDDFFADNMGREMADKFFPMIATFALYIAVANLIGLIPGFMSPTASINTTLALTLIVWATHHVIGFKEHGLGYYKHFIGPMKWLVPLMLPIELISNFARLLSLSIRLFGNIMAKEVLLGILFGLAGMFFAPLPIMVLGVLVSLVQAMVFVLLTVVYFAQAQEHAH.

The next 6 helical transmembrane spans lie at 41 to 61 (WLVMAFLFLVSKFTLGNLEII), 92 to 112 (FFPMIATFALYIAVANLIGLI), 121 to 141 (SINTTLALTLIVWATHHVIGF), 152 to 172 (FIGPMKWLVPLMLPIELISNF), 191 to 211 (VLLGILFGLAGMFFAPLPIMV), and 212 to 232 (LGVLVSLVQAMVFVLLTVVYF).

Belongs to the ATPase A chain family. As to quaternary structure, F-type ATPases have 2 components, CF(1) - the catalytic core - and CF(0) - the membrane proton channel. CF(1) has five subunits: alpha(3), beta(3), gamma(1), delta(1), epsilon(1). CF(0) has three main subunits: a(1), b(2) and c(9-12). The alpha and beta chains form an alternating ring which encloses part of the gamma chain. CF(1) is attached to CF(0) by a central stalk formed by the gamma and epsilon chains, while a peripheral stalk is formed by the delta and b chains.

It localises to the cell inner membrane. Its function is as follows. Key component of the proton channel; it plays a direct role in the translocation of protons across the membrane. The sequence is that of ATP synthase subunit a from Desulfotalea psychrophila (strain LSv54 / DSM 12343).